Reading from the N-terminus, the 363-residue chain is Fructose-bisphosphate aldolase C-B (363 aa).

Arg56 and Lys147 together coordinate substrate. The Proton acceptor role is filled by Glu188. Lys230 acts as the Schiff-base intermediate with dihydroxyacetone-P in catalysis.

It belongs to the class I fructose-bisphosphate aldolase family. In terms of assembly, homotetramer.

It carries out the reaction beta-D-fructose 1,6-bisphosphate = D-glyceraldehyde 3-phosphate + dihydroxyacetone phosphate. Its pathway is carbohydrate degradation; glycolysis; D-glyceraldehyde 3-phosphate and glycerone phosphate from D-glucose: step 4/4. The polypeptide is Fructose-bisphosphate aldolase C-B (aldocb) (Danio rerio (Zebrafish)).